Reading from the N-terminus, the 118-residue chain is MAAEEGQVIGCHTVEAWNEQLQKGNDTKGLIVVDFTASWCGPCRFIAPFLAELAKKLPNVTFLKVDVDELKTVAHEWAVESMPTFMFLKEGKIMDKVVGAKKDELQQTIAKHMATAST.

One can recognise a Thioredoxin domain in the interval 2–114 (AAEEGQVIGC…LQQTIAKHMA (113 aa)). Catalysis depends on nucleophile residues Cys-40 and Cys-43. A disulfide bridge links Cys-40 with Cys-43.

The protein belongs to the thioredoxin family. Plant H-type subfamily.

It localises to the cytoplasm. In terms of biological role, participates in various redox reactions through the reversible oxidation of the active center dithiol to a disulfide. The H form is known to activate a number of cytosolic enzymes. The chain is Thioredoxin H-type from Ricinus communis (Castor bean).